Reading from the N-terminus, the 156-residue chain is Arginine repressor (156 aa).

This sequence belongs to the ArgR family.

It is found in the cytoplasm. The protein operates within amino-acid biosynthesis; L-arginine biosynthesis [regulation]. Functionally, regulates arginine biosynthesis genes. The sequence is that of Arginine repressor from Shewanella sediminis (strain HAW-EB3).